A 1715-amino-acid chain; its full sequence is Rho guanine nucleotide exchange factor TIAM2 (1715 aa).

Polar residues-rich tracts occupy residues 1-22 (MGNS…TVTG) and 218-229 (GSPSSQRPSPTD). Disordered stretches follow at residues 1–27 (MGNS…KQKP), 174–249 (FHNG…WYDS), 263–294 (SFLA…SSLS), and 385–418 (TGSL…NAEG). The N-myristoyl glycine moiety is linked to residue G2. The segment covering 235-245 (SKGSSLSSESS) has biased composition (low complexity). The segment covering 395-411 (LQEPRSMEGSEYFDSHS) has biased composition (basic and acidic residues). Positions 504 to 618 (VVRKAGWLFF…WVTAIHSACA (115 aa)) constitute a PH 1 domain. Positions 665–692 (PKNRKAIENQIRQWEQNLEKFHMDLFRM) form a coiled coil. In terms of domain architecture, RBD spans 831 to 902 (VQTYVHFQDN…YMQEQVYDEI (72 aa)). The PDZ domain occupies 911–997 (DVQLTKTGDM…GLTLVARPVT (87 aa)). The segment at 1092–1113 (THTNSMEAPTESHDPPPRPLAR) is disordered. One can recognise a DH domain in the interval 1120–1314 (RLRKVIQELV…EKVASHINEM (195 aa)). One can recognise a PH 2 domain in the interval 1347 to 1478 (LLMHSTVSWL…KVIRSILREN (132 aa)). The tract at residues 1515–1582 (SLKGLRTSSS…EGLAEFPDGL (68 aa)) is disordered. Positions 1522–1532 (SSSSEWPSEPS) are enriched in low complexity. Positions 1533-1552 (KGNSLDSDECSLSSGTQSSG) are enriched in polar residues. The segment covering 1557-1572 (ESRRDSKSTELEKDAQ) has biased composition (basic and acidic residues). Residue S1604 is modified to Phosphoserine. A Phosphothreonine modification is found at T1662.

Belongs to the TIAM family. As to quaternary structure, interacts with MAP1A, MAP1B, PARP1 and YWHAE. Interacts with CD44, PARD3 and MAPK8IP2. Phosphorylated on serine and threonine residues. Phosphorylated on Thr-1662 by Rho-kinase. Its phosphorylation by Rho-kinase inhibits its guanine nucleotide exchange activity, its interaction with MAP1A, MAP1B, PARP1 and YWHAE and reduces its ability to promote neurite growth. As to expression, expressed in fetal brain (at protein level). Expressed in the olfactory bulb, cortical plate of the cerebral cortex, caudate putamen, hippocampus, ependymal cells of the lateral surface of the lateral ventricles of the brain. Weakly expressed in heart, lung, liver, skeletal muscle, kidney and testis.

It localises to the cytoplasm. Its subcellular location is the cell projection. The protein resides in the lamellipodium. It is found in the filopodium. The protein localises to the growth cone. It localises to the neuron projection. Its subcellular location is the perikaryon. Its function is as follows. Modulates the activity of RHO-like proteins and connects extracellular signals to cytoskeletal activities. Acts as a GDP-dissociation stimulator protein that stimulates the GDP-GTP exchange activity of RHO-like GTPases and activates them. Activates specifically RAC1, but not CDC42 and RHOA. Mediates extracellular laminin signals to activate Rac1, contributing to neurite growth. Involved in lamellipodial formation and advancement of the growth cone of embryonic hippocampal neurons. Promotes migration of neurons in the cerebral cortex. When overexpressed, induces membrane ruffling accompanied by the accumulation of actin filaments along the altered plasma membrane. In Mus musculus (Mouse), this protein is Rho guanine nucleotide exchange factor TIAM2.